The following is a 36-amino-acid chain: U-limacoditoxin(7)-Dv63 (36 aa).

The N-terminal stretch at 1–19 is a signal peptide; the sequence is MFKPRVILLITIIAVFSEF.

The protein belongs to the limacoditoxin-7 family. Expressed by the venom secretory cell of the spine. The spine is a cuticular structure containing a single large nucleated venom-secreting cell at its base. It is an independent unit capable of producing, storing and injecting venom. On the back of D.vulnerans caterpillars, spines are grouped together by 50 to 100 to form scoli, of which there are eight in D.vulnerans.

The protein resides in the secreted. Its function is as follows. Peptide with insecticidal and antiparasitic activities. Induces irreversible paralysis in D.melanogaster when tested at high doses. It shows a moderate antiparasitic activity against the major pathogenic nematode of ruminants (H.contortus, EC(50)=41.3 uM). Does not show antimicrobial activities. Does not induce increase in intracellular calcium in mouse DRG neurons, suggesting that it does not induce pain. The protein is U-limacoditoxin(7)-Dv63 of Doratifera vulnerans (Mottled cup moth).